The primary structure comprises 248 residues: Deoxyribose-phosphate aldolase (248 aa).

D106 (proton donor/acceptor) is an active-site residue. K168 (schiff-base intermediate with acetaldehyde) is an active-site residue. K197 (proton donor/acceptor) is an active-site residue.

It belongs to the DeoC/FbaB aldolase family. DeoC type 1 subfamily.

It is found in the cytoplasm. The enzyme catalyses 2-deoxy-D-ribose 5-phosphate = D-glyceraldehyde 3-phosphate + acetaldehyde. It functions in the pathway carbohydrate degradation; 2-deoxy-D-ribose 1-phosphate degradation; D-glyceraldehyde 3-phosphate and acetaldehyde from 2-deoxy-alpha-D-ribose 1-phosphate: step 2/2. In terms of biological role, catalyzes a reversible aldol reaction between acetaldehyde and D-glyceraldehyde 3-phosphate to generate 2-deoxy-D-ribose 5-phosphate. This is Deoxyribose-phosphate aldolase from Rhizobium meliloti (strain 1021) (Ensifer meliloti).